A 95-amino-acid polypeptide reads, in one-letter code: U8-barytoxin-Tl1a (95 aa).

The signal sequence occupies residues 1–21 (MKTLVLVAVLGLASLYLLSYA). A propeptide spanning residues 22–50 (SEVQQLSVAEEEFGALIDAFGGLLETEER) is cleaved from the precursor. 3 disulfide bridges follow: Cys-57/Cys-71, Cys-64/Cys-76, and Cys-70/Cys-86.

This sequence belongs to the neurotoxin 10 (Hwtx-1) family. 26 (ICK-1) subfamily. Expressed by the venom gland.

It localises to the secreted. Its function is as follows. Ion channel inhibitor. This Trittame loki (Brush-footed trapdoor spider) protein is U8-barytoxin-Tl1a.